A 64-amino-acid polypeptide reads, in one-letter code: PYLa/PGLa A (64 aa).

Positions 1–20 (MYKQIFLCLIIAALCATIMA) are cleaved as a signal peptide. Residues 21–35 (EASAFADADEDDDKR) constitute a propeptide that is removed on maturation. Residue L59 is modified to Leucine amide. Residues 60–64 (GRRDS) constitute a propeptide that is removed on maturation.

This sequence belongs to the gastrin/cholecystokinin family. Magainin subfamily. As to expression, expressed by the skin glands. Synthesized in the stomach and stored in a novel granular multinucleated cell in the gastric mucosa. Stored as active, processed peptides in large granules within the granular gland secretions of the skin.

The protein localises to the secreted. Its function is as follows. PGLa and PGLa-H display a broad-spectrum of antibacterial activity against a range of Gram-positive and Gram-negative bacteria. PGLa also displays antifungal activity against C.albicans ATCC 14053. PGLa-H shows moderate antibacterial activity against the multidrug-resistant methicillin-resistant S.aureus (MRSA) but exhibits very little hemolytic activity. This Xenopus laevis (African clawed frog) protein is PYLa/PGLa A (pgla-a).